The following is a 233-amino-acid chain: Phosphoglycolate phosphatase 2 (233 aa).

Asp-13 acts as the Nucleophile in catalysis. Residues Asp-13 and Asp-15 each contribute to the Mg(2+) site. Lys-152 serves as a coordination point for substrate. Asp-174 and Asp-178 together coordinate Mg(2+).

Belongs to the archaeal SPP-like hydrolase family. Mg(2+) serves as cofactor.

It carries out the reaction 2-phosphoglycolate + H2O = glycolate + phosphate. Catalyzes the dephosphorylation of 2-phosphoglycolate. This is Phosphoglycolate phosphatase 2 from Saccharolobus solfataricus (strain ATCC 35092 / DSM 1617 / JCM 11322 / P2) (Sulfolobus solfataricus).